Here is a 263-residue protein sequence, read N- to C-terminus: Ribosome maturation factor RimP (263 aa).

The interval 192-263 is disordered; that stretch reads EREMKRDLGI…RGEIDPIEGE (72 aa). Residues 217–231 are compositionally biased toward basic residues; that stretch reads PARRNAPKPKLKSTA. Residues 232–257 show a composition bias toward basic and acidic residues; the sequence is KAHEKKPPKNTKEHRLAAERLRRGEI.

The protein belongs to the RimP family.

It is found in the cytoplasm. In terms of biological role, required for maturation of 30S ribosomal subunits. This Nitrobacter hamburgensis (strain DSM 10229 / NCIMB 13809 / X14) protein is Ribosome maturation factor RimP.